We begin with the raw amino-acid sequence, 108 residues long: Glutaredoxin-1 (108 aa).

The Glutaredoxin domain occupies 3–106 (EEFVQQRLAN…DILSSIGVLR (104 aa)). Residues C23 and C26 are joined by a disulfide bond.

It belongs to the glutaredoxin family.

It is found in the virion. Its function is as follows. Has thioltransferase and dehydroascorbate reductase activities. This Camelpox virus (strain M-96) protein is Glutaredoxin-1 (OPG075).